The chain runs to 159 residues: Phosphopantetheine adenylyltransferase (159 aa).

Residue Thr10 participates in substrate binding. ATP is bound by residues 10-11 (TF) and His18. Lys42, Met74, and Arg88 together coordinate substrate. ATP is bound by residues 89 to 91 (GLR), Glu99, and 124 to 130 (WSFISSS).

Belongs to the bacterial CoaD family. As to quaternary structure, homohexamer. Requires Mg(2+) as cofactor.

It is found in the cytoplasm. The enzyme catalyses (R)-4'-phosphopantetheine + ATP + H(+) = 3'-dephospho-CoA + diphosphate. It functions in the pathway cofactor biosynthesis; coenzyme A biosynthesis; CoA from (R)-pantothenate: step 4/5. Reversibly transfers an adenylyl group from ATP to 4'-phosphopantetheine, yielding dephospho-CoA (dPCoA) and pyrophosphate. The sequence is that of Phosphopantetheine adenylyltransferase from Salmonella arizonae (strain ATCC BAA-731 / CDC346-86 / RSK2980).